The chain runs to 386 residues: Probable copper-dependent oxygenase M1 (386 aa).

Positions 1–22 (MLRMKKICTAFLTIALCTHVLA) are cleaved as a signal peptide. N-linked (GlcNAc...) asparagine glycosylation is present at N86. The helical transmembrane segment at 334–354 (FVVPIAAIAFIALTIGAGYVF) threads the bilayer.

Belongs to the clz3 oxygenase family.

Its subcellular location is the membrane. The protein operates within secondary metabolite biosynthesis. In terms of biological role, probable copper-dependent oxygenase; part of the gene cluster that mediates the biosynthesis of squalestatin S1 (SQS1, also known as zaragozic acid A), a heavily oxidized fungal polyketide that offers potent cholesterol lowering activity by targeting squalene synthase (SS). SQS1 is composed of a 2,8-dioxobicyclic[3.2.1]octane-3,4,5-tricarboxyclic acid core that is connected to two lipophilic polyketide arms. These initial steps feature the priming of an unusual benzoic acid starter unit onto the highly reducing polyketide synthase pks2, followed by oxaloacetate extension and product release to generate a tricarboxylic acid containing product. The phenylalanine ammonia lyase (PAL) M7 and the acyl-CoA ligase M9 are involved in transforming phenylalanine into benzoyl-CoA. The citrate synthase-like protein R3 is involved in connecting the C-alpha-carbons of the hexaketide chain and oxaloacetate to afford the tricarboxylic acid unit. The potential hydrolytic enzymes, M8 and M10, are in close proximity to pks2 and may participate in product release. On the other side, the tetraketide arm is synthesized by a the squalestatin tetraketide synthase pks1 and enzymatically esterified to the core in the last biosynthetic step, by the acetyltransferase M4. The biosynthesis of the tetraketide must involve 3 rounds of chain extension. After the first and second rounds methyl-transfer occurs, and in all rounds of extension the ketoreductase and dehydratase are active. The enoyl reductase and C-MeT of pks1 are not active in the final round of extension. The acetyltransferase M4 appears to have a broad substrate selectivity for its acyl CoA substrate, allowing the in vitro synthesis of novel squalestatins. The biosynthesis of SQS1 requires several oxidative steps likely performed by oxidoreductases M1, R1 and R2. Finally, in support of the identification of the cluster as being responsible for SQS1 production, the cluster contains a gene encoding a putative squalene synthase (SS) R6, suggesting a likely mechanism for self-resistance. The polypeptide is Probable copper-dependent oxygenase M1 (Phoma sp. (strain ATCC 20986 / MF5453)).